The primary structure comprises 309 residues: Malate dehydrogenase (309 aa).

NAD(+) contacts are provided by residues 9–14 (GAGFVG) and Asp-33. Positions 82 and 88 each coordinate substrate. NAD(+) is bound by residues Asn-95 and 118 to 120 (VNN). Substrate-binding residues include Asn-120 and Arg-151. His-175 serves as the catalytic Proton acceptor.

This sequence belongs to the LDH/MDH superfamily. MDH type 3 family. Homotetramer (active enzyme); homodimer and homotrimer at temperatures lower than 55 degrees Celsius (inactive forms).

It carries out the reaction (S)-malate + NAD(+) = oxaloacetate + NADH + H(+). Functionally, catalyzes the reversible oxidation of malate to oxaloacetate. This Chloroflexus aurantiacus (strain ATCC 29366 / DSM 635 / J-10-fl) protein is Malate dehydrogenase.